The chain runs to 341 residues: NADH-ubiquinone oxidoreductase chain 2 (341 aa).

The next 10 helical transmembrane spans lie at Ile-8–Leu-28, Phe-61–Ala-81, Met-95–Pro-115, Leu-121–Ile-141, Ile-146–Leu-166, Leu-174–Glu-194, Ser-195–Phe-215, Phe-238–Pro-258, Phe-273–Cys-293, and Leu-321–Leu-341.

Belongs to the complex I subunit 2 family.

It is found in the mitochondrion inner membrane. The catalysed reaction is a ubiquinone + NADH + 5 H(+)(in) = a ubiquinol + NAD(+) + 4 H(+)(out). Functionally, core subunit of the mitochondrial membrane respiratory chain NADH dehydrogenase (Complex I) that is believed to belong to the minimal assembly required for catalysis. Complex I functions in the transfer of electrons from NADH to the respiratory chain. The immediate electron acceptor for the enzyme is believed to be ubiquinone. The polypeptide is NADH-ubiquinone oxidoreductase chain 2 (mt:ND2) (Drosophila yakuba (Fruit fly)).